The sequence spans 353 residues: MKSTFGLLALAAAAKMAHAHATVQAIWINGVDQGAGNSASGYIRSPPNNSPLVDVTSADMTCNVNGKNPVAKTLPVKAGDKITFEWHHTDRSPSDDIIASSHRGPIMVYMAPTAKGAAGNGWVKIAEEGYSNGKWAVDNLIANRGKHSIVVPDVPAGDYLFRPEIIALHEGNRLGGAQFYMECVQVKVTSNGANALPAGVSIPGAYKATDPGVHFDIYNSFSSYPMPGPAVWNGASAAGSAPAPTAAPTQKPVVTAAPTTLATLVKPTTTTAAAPAETDSCDGDDDDYETETPAPQASATQAPAPQRPAPQTPSGSVKEWYQCGGINYTGAKNCESGLVCKEWNPYYHQCIKA.

The signal sequence occupies residues 1–19; that stretch reads MKSTFGLLALAAAAKMAHA. Residues histidine 20 and histidine 102 each coordinate Cu(2+). Cysteine 62 and cysteine 183 are joined by a disulfide. Histidine 169 contributes to the O2 binding site. Residue tyrosine 180 coordinates Cu(2+). Low complexity predominate over residues 266–276; it reads KPTTTTAAAPA. The disordered stretch occupies residues 266–316; that stretch reads KPTTTTAAAPAETDSCDGDDDDYETETPAPQASATQAPAPQRPAPQTPSGS. Residues 279 to 290 are compositionally biased toward acidic residues; the sequence is DSCDGDDDDYET. The segment covering 291 to 304 has biased composition (low complexity); the sequence is ETPAPQASATQAPA. The CBM1 domain maps to 315 to 351; sequence GSVKEWYQCGGINYTGAKNCESGLVCKEWNPYYHQCI. Residue asparagine 327 is glycosylated (N-linked (GlcNAc...) asparagine).

The protein belongs to the polysaccharide monooxygenase AA9 family. Cu(2+) is required as a cofactor.

It is found in the secreted. It catalyses the reaction [(1-&gt;4)-beta-D-glucosyl]n+m + reduced acceptor + O2 = 4-dehydro-beta-D-glucosyl-[(1-&gt;4)-beta-D-glucosyl]n-1 + [(1-&gt;4)-beta-D-glucosyl]m + acceptor + H2O.. In terms of biological role, lytic polysaccharide monooxygenase (LPMO) that depolymerizes crystalline and amorphous polysaccharides via the oxidation of scissile alpha- or beta-(1-4)-glycosidic bonds, yielding C4 oxidation products. Catalysis by LPMOs requires the reduction of the active-site copper from Cu(II) to Cu(I) by a reducing agent and H(2)O(2) or O(2) as a cosubstrate. In Aspergillus clavatus (strain ATCC 1007 / CBS 513.65 / DSM 816 / NCTC 3887 / NRRL 1 / QM 1276 / 107), this protein is AA9 family lytic polysaccharide monooxygenase A (eglD).